Here is a 306-residue protein sequence, read N- to C-terminus: GTPase IMAP family member 1 (306 aa).

Positions 1–21 (MGGRKMATDEENVYGLEENAQ) are disordered. Over 1–272 (MGGRKMATDE…RLWKWLKSPR (272 aa)) the chain is Cytoplasmic. The AIG1-type G domain occupies 25-229 (ESTRRLILVG…YSNEVYELAQ (205 aa)). A G1 region spans residues 34–41 (GRTGAGKS). Residues 34–42 (GRTGAGKSA) and Ser55 each bind GTP. The tract at residues 61-65 (SVTRA) is G2. The interval 82–85 (DTPD) is G3. The segment at 152–155 (TRKE) is G4. GTP-binding positions include 153–155 (RKE) and Asn190. The tract at residues 189–191 (DNR) is G5. The helical; Anchor for type IV membrane protein transmembrane segment at 273–292 (SWRLGLALLLGGALLFWVLL) threads the bilayer. At 293–306 (HRRWSEAVAEVGPD) the chain is on the lumenal side.

The protein belongs to the TRAFAC class TrmE-Era-EngA-EngB-Septin-like GTPase superfamily. AIG1/Toc34/Toc159-like paraseptin GTPase family. IAN subfamily. As to expression, predominantly expressed in the spleen and to a lesser extent in the lymph nodes. Detected in T-cells.

The protein resides in the endoplasmic reticulum membrane. It localises to the golgi apparatus membrane. May regulate lymphocyte survival. Required for normal levels of mature T-lymphocytes and mature B-cells. In Homo sapiens (Human), this protein is GTPase IMAP family member 1 (GIMAP1).